Reading from the N-terminus, the 270-residue chain is Pyrroline-5-carboxylate reductase (270 aa).

This sequence belongs to the pyrroline-5-carboxylate reductase family.

It is found in the cytoplasm. The catalysed reaction is L-proline + NADP(+) = (S)-1-pyrroline-5-carboxylate + NADPH + 2 H(+). It catalyses the reaction L-proline + NAD(+) = (S)-1-pyrroline-5-carboxylate + NADH + 2 H(+). Its pathway is amino-acid biosynthesis; L-proline biosynthesis; L-proline from L-glutamate 5-semialdehyde: step 1/1. Its function is as follows. Catalyzes the reduction of 1-pyrroline-5-carboxylate (PCA) to L-proline. The chain is Pyrroline-5-carboxylate reductase from Corynebacterium melassecola.